The sequence spans 437 residues: GTPase Obg (437 aa).

Positions 2–160 (SLFLDTARIE…KILLLELRVL (159 aa)) constitute an Obg domain. The 178-residue stretch at 161–338 (ADVGLVGFPS…LLARTSELLA (178 aa)) folds into the OBG-type G domain. Residues 167–174 (GFPSVGKS), 192–196 (FTTIT), 214–217 (DMPG), 284–287 (NKMD), and 319–321 (SGL) each bind GTP. Mg(2+) contacts are provided by serine 174 and threonine 194. The 79-residue stretch at 359–437 (GFEDEEKPFK…IQKFEFEFVD (79 aa)) folds into the OCT domain.

The protein belongs to the TRAFAC class OBG-HflX-like GTPase superfamily. OBG GTPase family. In terms of assembly, monomer. Mg(2+) serves as cofactor.

The protein localises to the cytoplasm. Its function is as follows. An essential GTPase which binds GTP, GDP and possibly (p)ppGpp with moderate affinity, with high nucleotide exchange rates and a fairly low GTP hydrolysis rate. Plays a role in control of the cell cycle, stress response, ribosome biogenesis and in those bacteria that undergo differentiation, in morphogenesis control. This is GTPase Obg from Lactococcus lactis subsp. cremoris (strain SK11).